Here is a 459-residue protein sequence, read N- to C-terminus: Serine--tRNA ligase (459 aa).

254–256 (TAE) serves as a coordination point for L-serine. ATP contacts are provided by residues 285–287 (RKE) and V301. E308 is a binding site for L-serine. 372 to 375 (EMVS) lines the ATP pocket. L-serine is bound at residue T408.

This sequence belongs to the class-II aminoacyl-tRNA synthetase family. Type-1 seryl-tRNA synthetase subfamily. As to quaternary structure, homodimer. The tRNA molecule binds across the dimer.

The protein resides in the cytoplasm. It catalyses the reaction tRNA(Ser) + L-serine + ATP = L-seryl-tRNA(Ser) + AMP + diphosphate + H(+). It carries out the reaction tRNA(Sec) + L-serine + ATP = L-seryl-tRNA(Sec) + AMP + diphosphate + H(+). The protein operates within aminoacyl-tRNA biosynthesis; selenocysteinyl-tRNA(Sec) biosynthesis; L-seryl-tRNA(Sec) from L-serine and tRNA(Sec): step 1/1. In terms of biological role, catalyzes the attachment of serine to tRNA(Ser). Is also able to aminoacylate tRNA(Sec) with serine, to form the misacylated tRNA L-seryl-tRNA(Sec), which will be further converted into selenocysteinyl-tRNA(Sec). The protein is Serine--tRNA ligase of Staphylothermus marinus (strain ATCC 43588 / DSM 3639 / JCM 9404 / F1).